Here is a 209-residue protein sequence, read N- to C-terminus: Guanylate kinase (209 aa).

The Guanylate kinase-like domain maps to 5–184; it reads GLLIVFSGPS…AAERVKRVIE (180 aa). An ATP-binding site is contributed by 12–19; it reads GPSGVGKG.

It belongs to the guanylate kinase family.

It localises to the cytoplasm. It catalyses the reaction GMP + ATP = GDP + ADP. Its function is as follows. Essential for recycling GMP and indirectly, cGMP. This chain is Guanylate kinase, found in Streptococcus agalactiae serotype Ia (strain ATCC 27591 / A909 / CDC SS700).